The chain runs to 417 residues: GPI mannosyltransferase 2 (417 aa).

9 helical membrane passes run 10–30 (FLII…LVWL), 104–124 (IVLK…WIVY), 142–162 (LALT…LISV), 167–187 (IAFT…SFDV), 206–226 (FCFA…LFYV), 239–259 (ITSI…FVYF), 312–332 (IPNF…ITYF), 344–364 (YIWI…VQII), and 394–414 (YYVM…ACFL).

It belongs to the PIGV family.

The protein localises to the endoplasmic reticulum membrane. The protein operates within glycolipid biosynthesis; glycosylphosphatidylinositol-anchor biosynthesis. Its function is as follows. Mannosyltransferase involved in glycosylphosphatidylinositol-anchor biosynthesis. Transfers the second mannose to the glycosylphosphatidylinositol during GPI precursor assembly. The protein is GPI mannosyltransferase 2 (GPI18) of Kluyveromyces lactis (strain ATCC 8585 / CBS 2359 / DSM 70799 / NBRC 1267 / NRRL Y-1140 / WM37) (Yeast).